The chain runs to 610 residues: DNA mismatch repair protein MutL (610 aa).

Belongs to the DNA mismatch repair MutL/HexB family.

Functionally, this protein is involved in the repair of mismatches in DNA. It is required for dam-dependent methyl-directed DNA mismatch repair. May act as a 'molecular matchmaker', a protein that promotes the formation of a stable complex between two or more DNA-binding proteins in an ATP-dependent manner without itself being part of a final effector complex. In Rickettsia canadensis (strain McKiel), this protein is DNA mismatch repair protein MutL.